The primary structure comprises 324 residues: Bile salt hydrolase/transferase (324 aa).

Catalysis depends on Cys2, which acts as the Nucleophile; acyl-thioester intermediate. Residues Cys2 and Arg16 each contribute to the deoxycholate site. A taurine-binding site is contributed by Asn79.

This sequence belongs to the peptidase C59 family. In terms of assembly, homotetramer. The tetramer consists of a dimer of dimers.

The catalysed reaction is glycocholate + H2O = cholate + glycine. It carries out the reaction glycodeoxycholate + H2O = deoxycholate + glycine. It catalyses the reaction chenodeoxycholate + glycine = glycochenodeoxycholate + H2O. The enzyme catalyses cholate + taurine = taurocholate + H2O. The catalysed reaction is taurodeoxycholate + H2O = deoxycholate + taurine. It carries out the reaction taurochenodeoxycholate + H2O = chenodeoxycholate + taurine. It catalyses the reaction an L-alpha-amino acid + cholate = an N-choloyl-L-alpha-amino acid + H2O. The enzyme catalyses an L-alpha-amino acid + taurocholate = an N-choloyl-L-alpha-amino acid + taurine. The catalysed reaction is glycocholate + an L-alpha-amino acid = an N-choloyl-L-alpha-amino acid + glycine. It participates in lipid metabolism; bile acid biosynthesis. In terms of biological role, possesses dual functions in bile acid metabolism. Acts as a bile salt hydrolase that catalyzes the deconjugation of glycine- and taurine-linked bile salts, which occurs naturally in the intestines of animals, releasing amino acid residues and deconjugated bile salts (bile acids). Can hydrolyze the amide bond in the bile salts glycocholate (GCA), glycodeoxycholate (GDCA), glycochenodeoxycholate (GCDCA), taurocholate (TCA), taurodeoxycholate (TDCA) and taurochenodeoxycholate (TCDCA). Shows a preference for glycine-conjugated bile acids as substrates. Also acts as an amine N-acyltransferase that conjugates a wide variety of amino acids to conjugated and non-conjugated bile acids, thus producing bacterial bile acid amidates (BBAAs) - also named microbially conjugated bile acids (MCBAs) - in the gastrointestinal tract. These BBAAs may facilitate communication between the microbiota and host through the activation of host ligand-activated transcription factors. This is Bile salt hydrolase/transferase from Lactiplantibacillus plantarum (strain ATCC BAA-793 / NCIMB 8826 / WCFS1) (Lactobacillus plantarum).